The following is a 309-amino-acid chain: Ribosomal protein L11 methyltransferase (309 aa).

Positions 144, 165, 187, and 235 each coordinate S-adenosyl-L-methionine.

The protein belongs to the methyltransferase superfamily. PrmA family.

It localises to the cytoplasm. It carries out the reaction L-lysyl-[protein] + 3 S-adenosyl-L-methionine = N(6),N(6),N(6)-trimethyl-L-lysyl-[protein] + 3 S-adenosyl-L-homocysteine + 3 H(+). In terms of biological role, methylates ribosomal protein L11. The protein is Ribosomal protein L11 methyltransferase of Prochlorococcus marinus (strain MIT 9215).